The primary structure comprises 321 residues: Annexin B10 (321 aa).

Annexin repeat units follow at residues 15-86 (FDAS…GLMM), 87-158 (PPVE…LIVT), 171-243 (GQAK…AIVE), and 247-319 (SPAA…ALLG).

Belongs to the annexin family.

The chain is Annexin B10 (AnxB10) from Drosophila melanogaster (Fruit fly).